Reading from the N-terminus, the 1144-residue chain is PAN2-PAN3 deadenylation complex catalytic subunit PAN2 (1144 aa).

WD repeat units lie at residues 27–66 (KKEKQVTKVVFDTEANLIWAGDSYGRVSSYDPTYSLYTRH), 153–193 (SSTY…VIHS), 196–233 (GHSASITSMDFKDNTLVTAGKSKTFGYLQSDQFINVYD), and 302–341 (HPCKSISQFTLSPSGDYLAFLEEESMINMWNRSNSMSGFT). The segment at 344-481 (AAVLEYQDYP…LLEYKPSNNI (138 aa)) is linker. A USP domain is found at 482–887 (DIPPAYSKLQ…TPEIVVYSDA (406 aa)). The Exonuclease domain maps to 939–1110 (VALDAEFVSL…EDAHTALLLY (172 aa)). A divalent metal cation contacts are provided by Asp942, Glu944, Asp1051, and Asp1102.

Belongs to the peptidase C19 family. PAN2 subfamily. Forms a heterotrimer with an asymmetric homodimer of the regulatory subunit PAN3 to form the poly(A)-nuclease (PAN) deadenylation complex. A divalent metal cation is required as a cofactor.

It is found in the cytoplasm. It catalyses the reaction Exonucleolytic cleavage of poly(A) to 5'-AMP.. With respect to regulation, positively regulated by the regulatory subunit PAN3. Its function is as follows. Catalytic subunit of the poly(A)-nuclease (PAN) deadenylation complex, one of two cytoplasmic mRNA deadenylases involved in mRNA turnover. PAN specifically shortens poly(A) tails of RNA and the activity is stimulated by poly(A)-binding protein PAB1. PAN deadenylation is followed by rapid degradation of the shortened mRNA tails by the CCR4-NOT complex. Deadenylated mRNAs are then degraded by two alternative mechanisms, namely exosome-mediated 3'-5' exonucleolytic degradation, or deadenylation-dependent mRNA decaping and subsequent 5'-3' exonucleolytic degradation by XRN1. May also be involved in post-transcriptional maturation of mRNA poly(A) tails. In Kluyveromyces lactis (strain ATCC 8585 / CBS 2359 / DSM 70799 / NBRC 1267 / NRRL Y-1140 / WM37) (Yeast), this protein is PAN2-PAN3 deadenylation complex catalytic subunit PAN2.